The chain runs to 280 residues: RAD52 motif-containing protein 1 (280 aa).

Residues 18 to 101 (KTIFIWDIQP…SPLKVRLSTK (84 aa)) form the RRM domain.

As to quaternary structure, homodimer.

The protein resides in the nucleus. It is found in the cytoplasm. It localises to the nucleolus. May confer resistance to the antitumor agent cisplatin. Binds to DNA and RNA. The protein is RAD52 motif-containing protein 1 (rdm1) of Danio rerio (Zebrafish).